The following is a 603-amino-acid chain: Protein SHORT-ROOT 2 (603 aa).

Disordered stretches follow at residues 11 to 58 (HHHH…HSHS) and 106 to 140 (DFSSSSSSRQFHSGTGAPSSAPVPPPPSATTSSAG). Positions 31 to 44 (SYPSSRGSTSSPSS) are enriched in low complexity. Positions 45–58 (HHTHNHTYYHHSHS) are enriched in basic residues. Positions 108-125 (SSSSSSRQFHSGTGAPSS) are enriched in low complexity. One can recognise a GRAS domain in the interval 179–602 (AAPSSSGRWA…QPVVWASAWK (424 aa)). The tract at residues 186–249 (RWAAQLLMEC…LTTSGPRTLR (64 aa)) is leucine repeat I (LRI). A VHIID region spans residues 268-354 (ALKFQELSPW…DTPHLSITTV (87 aa)). The VHIID signature appears at 318 to 322 (LHILD). Residues 370–406 (EIGQRLEKFARLMGVPFSFRAVHHSGDLADLDLAALD) are leucine repeat II (LRII). Residues 416–514 (LAVNCVNALR…ERAVGRAIVD (99 aa)) are PFYRE. Residues 517-602 (SCPASQSAER…QPVVWASAWK (86 aa)) form an SAW region.

It belongs to the GRAS family. Does not interact with SCR1.

It localises to the nucleus. Its function is as follows. Putative transcription factor involved in asymmetric cell division. The protein is Protein SHORT-ROOT 2 (SHR2) of Oryza sativa subsp. japonica (Rice).